The following is a 253-amino-acid chain: Sulfate transporter CysZ (253 aa).

Helical transmembrane passes span 31–51 (FVIL…WWLF), 75–95 (LLWP…FSTI), 151–171 (IVLL…PVLW), and 222–242 (IPLL…AMWV).

This sequence belongs to the CysZ family.

Its subcellular location is the cell inner membrane. High affinity, high specificity proton-dependent sulfate transporter, which mediates sulfate uptake. Provides the sulfur source for the cysteine synthesis pathway. The polypeptide is Sulfate transporter CysZ (Escherichia coli O8 (strain IAI1)).